The sequence spans 295 residues: Proline-rich protein 18 (295 aa).

The span at 1-13 (MPFPPMPPPPAPA) shows a compositional bias: pro residues. Positions 1–133 (MPFPPMPPPP…GAGPCPDSAA (133 aa)) are disordered. Residues 14 to 29 (PGAQAARQLPRRPCAA) show a composition bias toward low complexity. Position 47 is a phosphoserine (S47). The residue at position 83 (R83) is an Omega-N-methylarginine. The segment covering 103 to 126 (ARTTYAATSAGTGTTAAGTSSGAG) has biased composition (low complexity). R172 carries the asymmetric dimethylarginine modification. Residues 181–192 (ARAAGPRRGGPA) are compositionally biased toward low complexity. A disordered region spans residues 181–227 (ARAAGPRRGGPASDPDAPPTAGQGRRAPPPGAQLLHGGLQVPQLSPR). R188 is subject to Omega-N-methylarginine.

This Homo sapiens (Human) protein is Proline-rich protein 18 (PRR18).